A 347-amino-acid chain; its full sequence is Quinolinate synthase (347 aa).

His47 and Ser68 together coordinate iminosuccinate. Residue Cys113 participates in [4Fe-4S] cluster binding. Residues 139 to 141 and Ser156 contribute to the iminosuccinate site; that span reads YAN. Cys200 serves as a coordination point for [4Fe-4S] cluster. Residues 226–228 and Thr243 contribute to the iminosuccinate site; that span reads HPE. [4Fe-4S] cluster is bound at residue Cys297.

This sequence belongs to the quinolinate synthase family. Type 1 subfamily. It depends on [4Fe-4S] cluster as a cofactor.

It localises to the cytoplasm. The catalysed reaction is iminosuccinate + dihydroxyacetone phosphate = quinolinate + phosphate + 2 H2O + H(+). It functions in the pathway cofactor biosynthesis; NAD(+) biosynthesis; quinolinate from iminoaspartate: step 1/1. In terms of biological role, catalyzes the condensation of iminoaspartate with dihydroxyacetone phosphate to form quinolinate. This Escherichia coli O7:K1 (strain IAI39 / ExPEC) protein is Quinolinate synthase.